The following is a 313-amino-acid chain: Olfactory receptor 4M1 (313 aa).

At 1 to 25 the chain is on the extracellular side; it reads METANYTKVTEFVLTGLSQTREVQL. N-linked (GlcNAc...) asparagine glycosylation occurs at N5. The chain crosses the membrane as a helical span at residues 26-49; the sequence is VLFVIFLSFYLFILPGNILIICTI. The Cytoplasmic segment spans residues 50–57; it reads RLDPHLTS. The helical transmembrane segment at 58 to 79 threads the bilayer; it reads PMYFLLANLALLDIWYSSITAP. Over 80-100 the chain is Extracellular; it reads KMLIDFFVERKIISFGGCIAQ. Cysteines 97 and 189 form a disulfide. The helical transmembrane segment at 101–120 threads the bilayer; that stretch reads LFFLHFVGASEMFLLTVMAY. The Cytoplasmic portion of the chain corresponds to 121 to 139; the sequence is DRYAAICRPLHYATIMNRR. Residues 140 to 158 form a helical membrane-spanning segment; the sequence is LCCILVALSWMGGFIHSII. Residues 159-195 are Extracellular-facing; that stretch reads QVALIVRLPFCGPNELDSYFCDITQVVRIACANTFPE. Residues 196–219 form a helical membrane-spanning segment; it reads ELVMICSSGLISVVCFIALLMSYA. At 220-237 the chain is on the cytoplasmic side; sequence FLLALLKKHSGSGENTNR. Residues 238–260 form a helical membrane-spanning segment; the sequence is AMSTCYSHITIVVLMFGPSIYIY. At 261-271 the chain is on the extracellular side; sequence ARPFDSFSLDK. The chain crosses the membrane as a helical span at residues 272–291; sequence VVSVFHTVIFPLLNPIIYTL. The Cytoplasmic segment spans residues 292–313; that stretch reads RNKEVKAAMRKVVTKYILCEEK.

Belongs to the G-protein coupled receptor 1 family. As to expression, highly expressed in the testis and olfactory bulb.

Its subcellular location is the cell membrane. Its function is as follows. Olfactory receptor that acts as a receptor of Asprosin hormone, potentially at the surface of hepatocytes and may help to promote hepatocyte glucose release. The chain is Olfactory receptor 4M1 from Homo sapiens (Human).